Here is a 351-residue protein sequence, read N- to C-terminus: V-type proton ATPase subunit d1 (351 aa).

Belongs to the V-ATPase V0D/AC39 subunit family. V-ATPase is a heteromultimeric enzyme composed of a peripheral catalytic V1 complex (components A to H) attached to an integral membrane V0 proton pore complex (components: a, c, c'', d and e).

It localises to the vacuole membrane. Functionally, subunit of the integral membrane V0 complex of vacuolar ATPase. Vacuolar ATPase is responsible for acidifying a variety of intracellular compartments in eukaryotic cells, thus providing most of the energy required for transport processes in the vacuolar system. The polypeptide is V-type proton ATPase subunit d1 (VHA-d1) (Arabidopsis thaliana (Mouse-ear cress)).